The chain runs to 225 residues: Small ribosomal subunit protein uS3 (225 aa).

Residues 38 to 106 (IRKFVQNRFN…PVNLNIIEVK (69 aa)) enclose the KH type-2 domain.

This sequence belongs to the universal ribosomal protein uS3 family. Part of the 30S ribosomal subunit. Forms a tight complex with proteins S10 and S14.

Its function is as follows. Binds the lower part of the 30S subunit head. Binds mRNA in the 70S ribosome, positioning it for translation. This is Small ribosomal subunit protein uS3 from Leptospira interrogans serogroup Icterohaemorrhagiae serovar copenhageni (strain Fiocruz L1-130).